A 37-amino-acid chain; its full sequence is Photosystem I reaction center subunit VIII (37 aa).

The helical transmembrane segment at L7–L27 threads the bilayer.

The protein belongs to the PsaI family.

It is found in the plastid. The protein resides in the chloroplast thylakoid membrane. Its function is as follows. May help in the organization of the PsaL subunit. The protein is Photosystem I reaction center subunit VIII of Eucalyptus globulus subsp. globulus (Tasmanian blue gum).